We begin with the raw amino-acid sequence, 341 residues long: Dihydroorotate dehydrogenase (quinone) (341 aa).

Residues 61–65 and Thr85 contribute to the FMN site; that span reads AGLDK. Lys65 is a binding site for substrate. Substrate is bound at residue 110-114; the sequence is NRMGF. FMN-binding residues include Asn138 and Asn171. Asn171 is a substrate binding site. Ser174 serves as the catalytic Nucleophile. Asn176 provides a ligand contact to substrate. The FMN site is built by Lys216 and Thr244. Residue 245-246 coordinates substrate; sequence NT. FMN is bound by residues Gly267, Gly296, and 317–318; that span reads YS.

Belongs to the dihydroorotate dehydrogenase family. Type 2 subfamily. In terms of assembly, monomer. FMN serves as cofactor.

The protein localises to the cell membrane. It carries out the reaction (S)-dihydroorotate + a quinone = orotate + a quinol. It functions in the pathway pyrimidine metabolism; UMP biosynthesis via de novo pathway; orotate from (S)-dihydroorotate (quinone route): step 1/1. Its function is as follows. Catalyzes the conversion of dihydroorotate to orotate with quinone as electron acceptor. The sequence is that of Dihydroorotate dehydrogenase (quinone) from Pseudomonas fluorescens (strain SBW25).